A 583-amino-acid chain; its full sequence is Protein FMP25, mitochondrial (583 aa).

A mitochondrion-targeting transit peptide spans 1–25 (MSFRLFTRTSQRLPRLNWVSPIRRY). A helical transmembrane segment spans residues 83-105 (AVGQGILILVVVGGLGTAYLRWP). RCC1 repeat units lie at residues 332-389 (KGQF…AIDK), 390-452 (TGEI…VTIR), 459-510 (DHHY…TETE), and 512-569 (ENEV…KEQR).

The protein localises to the mitochondrion membrane. This is Protein FMP25, mitochondrial (FMP25) from Saccharomyces cerevisiae (strain ATCC 204508 / S288c) (Baker's yeast).